The sequence spans 474 residues: Lysosomal protective protein (474 aa).

The first 23 residues, M1 to A23, serve as a signal peptide directing secretion. Cystine bridges form between C83–C356, C235–C251, C236–C241, and C276–C325. N-linked (GlcNAc...) (high mannose) asparagine glycosylation occurs at N140. S173 is a catalytic residue. N327 carries an N-linked (GlcNAc...) (high mannose) asparagine glycan. Catalysis depends on residues D394 and H451.

The protein belongs to the peptidase S10 family. Heterodimer of a 32 kDa chain and a 20 kDa chain; disulfide-linked.

Its subcellular location is the lysosome. It carries out the reaction Release of a C-terminal amino acid with broad specificity.. In terms of biological role, protective protein appears to be essential for both the activity of beta-galactosidase and neuraminidase, it associates with these enzymes and exerts a protective function necessary for their stability and activity. This protein is also a carboxypeptidase and can deamidate tachykinins. In Mus musculus (Mouse), this protein is Lysosomal protective protein (Ctsa).